The following is a 573-amino-acid chain: FACT complex subunit pob3 (573 aa).

Disordered regions lie at residues 153–174 and 485–573; these read SDGD…KAAA and LDND…KIGK. The segment covering 486-495 has biased composition (acidic residues); it reads DNDDMMSSDE. A compositionally biased stretch (basic and acidic residues) spans 496–505; it reads DGGRADRGSA. Composition is skewed to acidic residues over residues 506–530 and 541–562; these read DEDE…EFDS and AEMD…SEEE.

Belongs to the SSRP1 family. In terms of assembly, forms a stable heterodimer with spt16. The spt16-pob3 dimer weakly associates with multiple molecules of nhp6 to form the FACT complex.

The protein localises to the nucleus. Its subcellular location is the chromosome. Functionally, component of the FACT complex, a general chromatin factor that acts to reorganize nucleosomes. The FACT complex is involved in multiple processes that require DNA as a template such as mRNA elongation, DNA replication and DNA repair. During transcription elongation the FACT complex acts as a histone chaperone that both destabilizes and restores nucleosomal structure. It facilitates the passage of RNA polymerase II and transcription by promoting the dissociation of one histone H2A-H2B dimer from the nucleosome, then subsequently promotes the reestablishment of the nucleosome following the passage of RNA polymerase II. This chain is FACT complex subunit pob3 (pob3), found in Aspergillus fumigatus (strain ATCC MYA-4609 / CBS 101355 / FGSC A1100 / Af293) (Neosartorya fumigata).